A 782-amino-acid polypeptide reads, in one-letter code: MYKKMSLRQLFSDRPPLNAVLQEKAQKLRYACSPSKCIHSLLSFLPIITWLPKYDWSHSFFGDLSGGLTMAVFSVPQGIALASITGVPPVYGLYTAIFPSFLYIFFGTSKHNALGGFAVLSLMTHGAIEKVMLRTATSYNATAYVNHTLDELLDKENETALISNTTLMQILGNETSFVEEVTMEMWTEGVTPVKQIHVATTIIFLAGVIQVFMGVFRLQYLTSLFSEQVMSGFVVGGGIHVFFAQIGNMLGIELPRRSGPGYLYYRIWDLVENLDNVHIPTVCISLSSFLFLVFGKEYLAPWLNSAFNYPVPFELVLVVVGITATNYAELSLRHDVKVVGNIPTEFPPPSLPRFDLIRHIGLNAAAIAITAVAIHITVAKVVEKRYKYKINHGQELYALGFVGVLSSFFPVFPVTSGFARSVVGAAVGGSTQLTCLFSSLALLSVILCIGPALEYLPQCILSAMIIFAQKGMLEKFGELKSLWPVFKIDFTIWLMSFFLTVCYDMGEGLLMAIGFAVLTTIIRTQRPKWHFLSRDDDTENYKETKKRDLERIQGNVCIFRMDAPLIFTSSDRFTMSVWQCVKKWERCKSESFVTIEQMNSDRSADIFDSKLKSARRRWKRDQKSENRCKLVIDCDGFPYVDYLGLSTLKSVYVDLQAAGIQCFFVVQKSDLKKLFRATDFYEVVDESKVFNKVGDAVKAAEQHISSPKTTKEILTALASIATTDTVLIDEESSDSNDNDDAEIQERITEESENSEEVMSETSVSIEDATSLTSSRNSINSEE.

Helical transmembrane passes span 30 to 52 (YACS…TWLP), 64 to 84 (LSGG…LASI), 86 to 106 (GVPP…YIFF), 113 to 133 (ALGG…KVML), 196 to 216 (IHVA…MGVF), 232 to 252 (GFVV…MLGI), 274 to 294 (LDNV…FLVF), 302 to 322 (WLNS…VVGI), 359 to 379 (HIGL…ITVA), 398 to 418 (ALGF…TSGF), 433 to 453 (LTCL…GPAL), and 497 to 517 (FFLT…GFAV). Residues 546–700 (KRDLERIQGN…NKVGDAVKAA (155 aa)) form the STAS domain. The segment covering 728-742 (IDEESSDSNDNDDAE) has biased composition (acidic residues). The segment at 728–782 (IDEESSDSNDNDDAEIQERITEESENSEEVMSETSVSIEDATSLTSSRNSINSEE) is disordered. Residues 767 to 782 (DATSLTSSRNSINSEE) are compositionally biased toward polar residues.

This sequence belongs to the SLC26A/SulP transporter (TC 2.A.53) family.

It localises to the membrane. Its function is as follows. Possible sulfate transporter. The chain is Sulfate permease family protein 3 (sulp-3) from Caenorhabditis elegans.